Here is a 398-residue protein sequence, read N- to C-terminus: MSDTILNPYFGEFGGMYVPEILVPVLQQLEKAFVEARNDPDFQQEFQDLLKNYAGRPTALTLCRNLTKGTKTKLYLKREDLLHGGAHKTNQVLGQILLAKRMGKTRIIAETGAGQHGVATALACAMLDMPCRVYMGSKDVERQSPNVFRMRLMGTEVVPVEKGSCSLKDACCEAMRDWSANYENTHYLLGTAAGPHPFPTIVREFQKMIGEETKRQILEKEGCLPDAVIAAVGGGSNAIGMFTDFIDETNVRLIGVEPAGKGIETGEHGAPLKHGKTGIYFGMKSPIMQTEDGQIEESYSISAGLDFPSVGPQHAYLNSIGRAEYPSITDDEALAAFKELAKHEGIIPALESSHALAQALKMIKSNPEKEQLLVVNLSGRGDKDIFTVDKILRAKGEL.

The residue at position 88 (Lys88) is an N6-(pyridoxal phosphate)lysine.

Belongs to the TrpB family. As to quaternary structure, tetramer of two alpha and two beta chains. Pyridoxal 5'-phosphate is required as a cofactor.

The enzyme catalyses (1S,2R)-1-C-(indol-3-yl)glycerol 3-phosphate + L-serine = D-glyceraldehyde 3-phosphate + L-tryptophan + H2O. Its pathway is amino-acid biosynthesis; L-tryptophan biosynthesis; L-tryptophan from chorismate: step 5/5. Functionally, the beta subunit is responsible for the synthesis of L-tryptophan from indole and L-serine. In Actinobacillus succinogenes (strain ATCC 55618 / DSM 22257 / CCUG 43843 / 130Z), this protein is Tryptophan synthase beta chain.